The primary structure comprises 388 residues: MTMRIDTDKQMNLLSDKNVAIIGGGPVGLTMAKLLQQNGIDVSVYERDNDREARIFGGTLDLHKGSGQEAMKKAGLLQTYYDLALPMGVNIADEKGNILSTKNVKPENRFDNPEINRNDLRAILLNSLENDTVIWDRKLVMLEPGKKKWTLTFENKPSETADLVILANGGMSKVRKFVTDTEVEETGTFNIQADIHQPEINCPGFFQLCNGNRLMASHQGNLLFANPNNNGALHFGISFKTPDEWKNQTQVDFQNRNSVVDFLLKEFSDWDERYKELIHTTLSFVGLATRIFPLEKPWKSKRPLPITMIGDAAHLMPPFAGQGVNSGLVDALILSDNLADGKFNSIEEAVKNYEQQMFIYGKEAQEESTQNEIEMFKPDFTFQQLLNV.

FAD-binding positions include 26-27 (PV) and 45-48 (YERD). Arg54 is an NADPH binding site. FAD-binding residues include Asp61, Arg117, and Leu139. Positions 192 and 213 each coordinate substrate. FAD contacts are provided by residues Asp311 and 321 to 324 (GQGV).

Belongs to the aromatic-ring hydroxylase family. TetX subfamily. As to quaternary structure, monomer. The cofactor is FAD.

Its subcellular location is the cytoplasm. The catalysed reaction is a tetracycline + NADPH + O2 + H(+) = an 11a-hydroxytetracycline + NADP(+) + H2O. It carries out the reaction tetracycline + NADPH + O2 + H(+) = 11a-hydroxytetracycline + NADP(+) + H2O. The enzyme catalyses tigecycline + NADPH + O2 + H(+) = 11a-hydroxytigecycline + NADP(+) + H2O. It catalyses the reaction oxytetracycline + NADPH + O2 + H(+) = 11a-hydroxy-oxytetracycline + NADP(+) + H2O. Its activity is regulated as follows. Anhydrotetracycline, a poor substrate, prevents tetracycline degradation in vitro. Its function is as follows. An FAD-requiring monooxygenase active on tetracycline antibiotic derivatives, which leads to their inactivation. Hydroxylates carbon 11a of oxytetracycline and tigecycline. Acts on many tetracycline analogs (chlorotetracycline, demeclocycline, doxycycline, minocycline, oxytetracyclinee), probably by monooxygenization. Tigecycline, a new generation tetracycline antibiotic, is rendered less effective against E.coli by this monooxygenation, is much weaker at inhibiting translation in vitro and binds Mg(2+) considerably less well. Expression in E.coli BW25113 reduces its growth rate about 5%. The reaction probably proceeds by FAD reduction by NADPH and, second, hydroxylation of antibiotic in a ping-pong mechanism. Degrades chlortetracycline, probably by monooxygenation. Slowly oxidizes anhydrotetracycline, the final substrate in tetracycline biosynthesis. The chain is Flavin-dependent monooxygenase from Bacteroides thetaiotaomicron.